We begin with the raw amino-acid sequence, 291 residues long: Acetylglutamate kinase (291 aa).

Substrate-binding positions include 61–62, Arg83, and Asn187; that span reads GG.

This sequence belongs to the acetylglutamate kinase family. ArgB subfamily.

The protein resides in the cytoplasm. The enzyme catalyses N-acetyl-L-glutamate + ATP = N-acetyl-L-glutamyl 5-phosphate + ADP. It participates in amino-acid biosynthesis; L-arginine biosynthesis; N(2)-acetyl-L-ornithine from L-glutamate: step 2/4. Functionally, catalyzes the ATP-dependent phosphorylation of N-acetyl-L-glutamate. The polypeptide is Acetylglutamate kinase (Methanoregula boonei (strain DSM 21154 / JCM 14090 / 6A8)).